A 269-amino-acid chain; its full sequence is Peptide deformylase 1A, chloroplastic/mitochondrial (269 aa).

A chloroplast and mitochondrion-targeting transit peptide spans 1–60 (MGLHRDEATAMETLFRVSLRLLPVSAAVTCRSIRFPVSRPGSSHLLNRKLYNLPTSSSSS). Residues 123-126 (PGVG) and Gly187 contribute to the substrate site. Residue Cys188 coordinates Zn(2+). The interval 191–196 (VDGFRA) is dimerization. His230 lines the Zn(2+) pocket. Glu231 is a catalytic residue. His234 contributes to the Zn(2+) binding site. The tract at residues 236–254 (DGNLYVDKMVPRTFRTVDN) is dimerization.

It belongs to the polypeptide deformylase family. Homodimer. It depends on Zn(2+) as a cofactor. Expressed in roots, leaves, flowers and siliques.

It localises to the plastid. The protein localises to the chloroplast stroma. Its subcellular location is the mitochondrion. It catalyses the reaction N-terminal N-formyl-L-methionyl-[peptide] + H2O = N-terminal L-methionyl-[peptide] + formate. Its activity is regulated as follows. Inhibited by actinonin. Removes the formyl group from the N-terminal Met of newly synthesized proteins. The chain is Peptide deformylase 1A, chloroplastic/mitochondrial (PDF1A) from Arabidopsis thaliana (Mouse-ear cress).